The sequence spans 344 residues: Protein RecA (344 aa).

Gly-65 to Thr-72 provides a ligand contact to ATP.

It belongs to the RecA family.

The protein localises to the cytoplasm. Functionally, can catalyze the hydrolysis of ATP in the presence of single-stranded DNA, the ATP-dependent uptake of single-stranded DNA by duplex DNA, and the ATP-dependent hybridization of homologous single-stranded DNAs. It interacts with LexA causing its activation and leading to its autocatalytic cleavage. The sequence is that of Protein RecA from Campylobacter lari.